A 308-amino-acid polypeptide reads, in one-letter code: UDP-N-acetylenolpyruvoylglucosamine reductase (308 aa).

In terms of domain architecture, FAD-binding PCMH-type spans 32–196 (VGGPAARLYK…ISAKLQLSPG (165 aa)). The active site involves arginine 176. Catalysis depends on serine 225, which acts as the Proton donor. The active site involves glutamate 296.

It belongs to the MurB family. FAD serves as cofactor.

It localises to the cytoplasm. It carries out the reaction UDP-N-acetyl-alpha-D-muramate + NADP(+) = UDP-N-acetyl-3-O-(1-carboxyvinyl)-alpha-D-glucosamine + NADPH + H(+). The protein operates within cell wall biogenesis; peptidoglycan biosynthesis. Cell wall formation. The polypeptide is UDP-N-acetylenolpyruvoylglucosamine reductase (Legionella pneumophila (strain Corby)).